We begin with the raw amino-acid sequence, 781 residues long: uncharacterized protein (781 aa).

The tract at residues 1 to 34 (MNIAEEPSDEVISSGPEDTDICSQQTSASAEAGD) is disordered. The residue at position 29 (Ser-29) is a Phosphoserine. RRM domains are found at residues 195 to 273 (GNIF…YHVE) and 295 to 418 (RCLF…KAVQ). Residues 345-375 (SNTRSSSSVSFNEEGSVESNKSSNNTNGNAQ) are disordered. The span at 347 to 364 (TRSSSSVSFNEEGSVESN) shows a compositional bias: low complexity. Polar residues predominate over residues 365–374 (KSSNNTNGNA). Residues Ser-433, Ser-435, Ser-482, and Ser-485 each carry the phosphoserine modification. A Phosphothreonine modification is found at Thr-486. Ser-501 bears the Phosphoserine mark. The region spanning 540 to 638 (SNLYVKHIPL…QVLSVSFAQK (99 aa)) is the RRM 3 domain. Residues 640-668 (GNLSSSDDDDQSQTDNSSKFQNFQPHNDY) are disordered.

Interacts with RBG1.

This is an uncharacterized protein from Saccharomyces cerevisiae (strain ATCC 204508 / S288c) (Baker's yeast).